The chain runs to 1026 residues: Multidrug resistance protein MdtC (1026 aa).

A run of 11 helical transmembrane segments spans residues 15-35 (ILIA…LPVA), 333-353 (EVEE…FLFL), 360-380 (LIPA…MYLC), 387-407 (LSLM…IVVL), 431-451 (VGFT…PLLL), 463-483 (FAVT…TLTP), 528-548 (LVGV…IAIP), 853-873 (LILI…LYES), 897-917 (LFNA…IGIV), 953-973 (PIMM…LSGG), and 984-1004 (ITIV…TPVV).

Belongs to the resistance-nodulation-cell division (RND) (TC 2.A.6) family. MdtC subfamily. As to quaternary structure, part of a tripartite efflux system composed of MdtA, MdtB and MdtC. MdtC forms a heteromultimer with MdtB.

The protein resides in the cell inner membrane. In Salmonella schwarzengrund (strain CVM19633), this protein is Multidrug resistance protein MdtC.